Here is a 336-residue protein sequence, read N- to C-terminus: Pyridoxal 5'-phosphate synthase subunit PdxS (336 aa).

D33 contacts D-ribose 5-phosphate. K90 (schiff-base intermediate with D-ribose 5-phosphate) is an active-site residue. Position 162 (G162) interacts with D-ribose 5-phosphate. Residue R174 coordinates D-glyceraldehyde 3-phosphate. Residues G260 and 281–282 (GS) each bind D-ribose 5-phosphate.

The protein belongs to the PdxS/SNZ family. In terms of assembly, in the presence of PdxT, forms a dodecamer of heterodimers.

It catalyses the reaction aldehydo-D-ribose 5-phosphate + D-glyceraldehyde 3-phosphate + L-glutamine = pyridoxal 5'-phosphate + L-glutamate + phosphate + 3 H2O + H(+). Its pathway is cofactor biosynthesis; pyridoxal 5'-phosphate biosynthesis. Functionally, catalyzes the formation of pyridoxal 5'-phosphate from ribose 5-phosphate (RBP), glyceraldehyde 3-phosphate (G3P) and ammonia. The ammonia is provided by the PdxT subunit. Can also use ribulose 5-phosphate and dihydroxyacetone phosphate as substrates, resulting from enzyme-catalyzed isomerization of RBP and G3P, respectively. The chain is Pyridoxal 5'-phosphate synthase subunit PdxS from Picrophilus torridus (strain ATCC 700027 / DSM 9790 / JCM 10055 / NBRC 100828 / KAW 2/3).